A 383-amino-acid polypeptide reads, in one-letter code: La protein homolog (383 aa).

Residues 1-43 (MTEVEAKATATEETTKEEEEAPETTAEQTEESAQETSENVSKL) form a disordered region. The span at 15-33 (TKEEEEAPETTAEQTEESA) shows a compositional bias: acidic residues. The 93-residue stretch at 37-129 (SENVSKLEAS…RRHPERPLPE (93 aa)) folds into the HTH La-type RNA-binding domain. The 88-residue stretch at 141 to 228 (RTVYVKGFAP…RKMQDDYFEE (88 aa)) folds into the RRM domain. The region spanning 249 to 368 (HLPKGASVHL…RTPEGRQASR (120 aa)) is the xRRM domain. Positions 343–383 (KDQQARRQASNARNKGRTPEGRQASRPPQEWRRKAKGGRGE) are disordered.

The protein localises to the nucleus. It is found in the cytoplasm. May be involved in transcription termination by RNA polymerase III. Binds RNA and DNA. Binds to the 3' end of the minus strand of Sindbis virus RNA. This may be significant for Sindbis virus RNA replication. In Aedes albopictus (Asian tiger mosquito), this protein is La protein homolog.